We begin with the raw amino-acid sequence, 261 residues long: UPF0246 protein Reut_A1014 (261 aa).

The protein belongs to the UPF0246 family.

This Cupriavidus pinatubonensis (strain JMP 134 / LMG 1197) (Cupriavidus necator (strain JMP 134)) protein is UPF0246 protein Reut_A1014.